Consider the following 507-residue polypeptide: Cyclin-dependent kinase-like 2 (507 aa).

The Protein kinase domain maps to Tyr4–Phe289. Residues Val10–Val18 and Lys33 contribute to the ATP site. The short motif at Lys45 to Glu51 is the [NKR]KIAxRE element. The active-site Proton acceptor is the Asp126. The segment at Lys365 to Ser392 is disordered.

Belongs to the protein kinase superfamily. CMGC Ser/Thr protein kinase family. CDC2/CDKX subfamily.

It is found in the cytoplasm. It localises to the nucleus. It carries out the reaction L-seryl-[protein] + ATP = O-phospho-L-seryl-[protein] + ADP + H(+). The enzyme catalyses L-threonyl-[protein] + ATP = O-phospho-L-threonyl-[protein] + ADP + H(+). This chain is Cyclin-dependent kinase-like 2, found in Rattus norvegicus (Rat).